The following is a 46-amino-acid chain: MRLHTGEKPYHCTHCERQFVQVANLRRHLRVHTGERPYACELCTSK.

3 C2H2-type zinc fingers span residues 1-4 (MRLH), 10-32 (YHCT…LRVH), and 38-46 (YACELCTSK).

It belongs to the krueppel C2H2-type zinc-finger protein family.

It is found in the nucleus. Functionally, krueppel is a gap class segmentation protein. The chain is Protein krueppel (Kr) from Lithobius forficatus (Centipede).